The chain runs to 142 residues: Large ribosomal subunit protein uL13 (142 aa).

The protein belongs to the universal ribosomal protein uL13 family. In terms of assembly, part of the 50S ribosomal subunit.

Its function is as follows. This protein is one of the early assembly proteins of the 50S ribosomal subunit, although it is not seen to bind rRNA by itself. It is important during the early stages of 50S assembly. This is Large ribosomal subunit protein uL13 from Acidovorax sp. (strain JS42).